The sequence spans 161 residues: N5-carboxyaminoimidazole ribonucleotide mutase (161 aa).

Substrate-binding residues include serine 9, aspartate 12, and arginine 39.

The protein belongs to the AIR carboxylase family. Class I subfamily.

It carries out the reaction 5-carboxyamino-1-(5-phospho-D-ribosyl)imidazole + H(+) = 5-amino-1-(5-phospho-D-ribosyl)imidazole-4-carboxylate. It participates in purine metabolism; IMP biosynthesis via de novo pathway; 5-amino-1-(5-phospho-D-ribosyl)imidazole-4-carboxylate from 5-amino-1-(5-phospho-D-ribosyl)imidazole (N5-CAIR route): step 2/2. Functionally, catalyzes the conversion of N5-carboxyaminoimidazole ribonucleotide (N5-CAIR) to 4-carboxy-5-aminoimidazole ribonucleotide (CAIR). This chain is N5-carboxyaminoimidazole ribonucleotide mutase, found in Aliivibrio fischeri (strain ATCC 700601 / ES114) (Vibrio fischeri).